We begin with the raw amino-acid sequence, 822 residues long: ATP-dependent zinc metalloprotease FTSH 7, chloroplastic (822 aa).

3 stretches are compositionally biased toward low complexity: residues 1–34 (MASA…RRAS), 80–94 (AEAS…SSSG), and 101–122 (AAAA…AAAT). 2 disordered regions span residues 1–44 (MASA…ASVR) and 67–136 (PAAR…ENKW). The transit peptide at 1–70 (MASASAAAET…RVLRRPPAAR (70 aa)) directs the protein to the chloroplast. Helical transmembrane passes span 154–174 (IVQG…IFAL) and 288–308 (GGLL…AVVL). ATP is bound at residue 386-393 (GLPGTGKT). His-611 is a Zn(2+) binding site. Glu-612 is an active-site residue. 2 residues coordinate Zn(2+): His-615 and Asp-694.

It in the N-terminal section; belongs to the AAA ATPase family. In the C-terminal section; belongs to the peptidase M41 family. Requires Zn(2+) as cofactor.

It localises to the plastid. The protein resides in the chloroplast thylakoid membrane. Its function is as follows. Probable ATP-dependent zinc metallopeptidase. This Oryza sativa subsp. japonica (Rice) protein is ATP-dependent zinc metalloprotease FTSH 7, chloroplastic (FTSH7).